The chain runs to 320 residues: Probable cell division protein WhiA (320 aa).

The H-T-H motif DNA-binding region spans 282 to 315 (TLKELGEMLSPAIGKSGVNHRLRKIDEIATKLQE).

The protein belongs to the WhiA family.

Functionally, involved in cell division and chromosome segregation. The sequence is that of Probable cell division protein WhiA from Alkaliphilus oremlandii (strain OhILAs) (Clostridium oremlandii (strain OhILAs)).